The following is a 178-amino-acid chain: uncharacterized protein (178 aa).

This sequence belongs to the IIV-6 136R family.

This is an uncharacterized protein from Invertebrate iridescent virus 6 (IIV-6).